We begin with the raw amino-acid sequence, 269 residues long: 3-deoxy-manno-octulosonate cytidylyltransferase (269 aa).

The protein belongs to the KdsB family.

Its subcellular location is the cytoplasm. The enzyme catalyses 3-deoxy-alpha-D-manno-oct-2-ulosonate + CTP = CMP-3-deoxy-beta-D-manno-octulosonate + diphosphate. It participates in nucleotide-sugar biosynthesis; CMP-3-deoxy-D-manno-octulosonate biosynthesis; CMP-3-deoxy-D-manno-octulosonate from 3-deoxy-D-manno-octulosonate and CTP: step 1/1. Its pathway is bacterial outer membrane biogenesis; lipopolysaccharide biosynthesis. In terms of biological role, activates KDO (a required 8-carbon sugar) for incorporation into bacterial lipopolysaccharide in Gram-negative bacteria. This Cupriavidus pinatubonensis (strain JMP 134 / LMG 1197) (Cupriavidus necator (strain JMP 134)) protein is 3-deoxy-manno-octulosonate cytidylyltransferase.